A 74-amino-acid polypeptide reads, in one-letter code: Large ribosomal subunit protein bL27c (74 aa).

This sequence belongs to the bacterial ribosomal protein bL27 family.

Its subcellular location is the plastid. The protein localises to the chloroplast. The polypeptide is Large ribosomal subunit protein bL27c (rpl27) (Pleurochrysis haptonemofera (Unicellular marine alga)).